Consider the following 105-residue polypeptide: Large ribosomal subunit protein uL24 (105 aa).

The protein belongs to the universal ribosomal protein uL24 family. As to quaternary structure, part of the 50S ribosomal subunit.

One of two assembly initiator proteins, it binds directly to the 5'-end of the 23S rRNA, where it nucleates assembly of the 50S subunit. Its function is as follows. One of the proteins that surrounds the polypeptide exit tunnel on the outside of the subunit. This is Large ribosomal subunit protein uL24 from Buchnera aphidicola subsp. Cinara cedri (strain Cc).